Reading from the N-terminus, the 88-residue chain is Small ribosomal subunit protein bS16c (88 aa).

Belongs to the bacterial ribosomal protein bS16 family.

The protein resides in the plastid. It is found in the chloroplast. In Coffea arabica (Arabian coffee), this protein is Small ribosomal subunit protein bS16c.